The chain runs to 131 residues: Small ribosomal subunit protein uS8 (131 aa).

This sequence belongs to the universal ribosomal protein uS8 family. As to quaternary structure, part of the 30S ribosomal subunit. Contacts proteins S5 and S12.

One of the primary rRNA binding proteins, it binds directly to 16S rRNA central domain where it helps coordinate assembly of the platform of the 30S subunit. The protein is Small ribosomal subunit protein uS8 of Neorickettsia sennetsu (strain ATCC VR-367 / Miyayama) (Ehrlichia sennetsu).